Here is a 137-residue protein sequence, read N- to C-terminus: Large ribosomal subunit protein uL16 (137 aa).

It belongs to the universal ribosomal protein uL16 family. As to quaternary structure, part of the 50S ribosomal subunit.

In terms of biological role, binds 23S rRNA and is also seen to make contacts with the A and possibly P site tRNAs. The polypeptide is Large ribosomal subunit protein uL16 (Alkalilimnicola ehrlichii (strain ATCC BAA-1101 / DSM 17681 / MLHE-1)).